The following is a 339-amino-acid chain: Glyceraldehyde-3-phosphate dehydrogenase (339 aa).

NAD(+) is bound by residues 13–14 (RI), Asp-35, and Lys-84. Residues 156 to 158 (SCT), Thr-187, 216 to 217 (TG), and Arg-239 contribute to the D-glyceraldehyde 3-phosphate site. Cys-157 functions as the Nucleophile in the catalytic mechanism. An NAD(+)-binding site is contributed by Asn-321.

The protein belongs to the glyceraldehyde-3-phosphate dehydrogenase family. Homotetramer.

The protein localises to the cytoplasm. It carries out the reaction D-glyceraldehyde 3-phosphate + phosphate + NAD(+) = (2R)-3-phospho-glyceroyl phosphate + NADH + H(+). Its pathway is carbohydrate degradation; glycolysis; pyruvate from D-glyceraldehyde 3-phosphate: step 1/5. The chain is Glyceraldehyde-3-phosphate dehydrogenase from Onchocerca volvulus.